A 247-amino-acid chain; its full sequence is Hydroxyacylglutathione hydrolase 1 (247 aa).

Zn(2+)-binding residues include H54, H56, D58, H59, H111, D128, and H165.

This sequence belongs to the metallo-beta-lactamase superfamily. Glyoxalase II family. Monomer. Zn(2+) serves as cofactor.

It catalyses the reaction an S-(2-hydroxyacyl)glutathione + H2O = a 2-hydroxy carboxylate + glutathione + H(+). The protein operates within secondary metabolite metabolism; methylglyoxal degradation; (R)-lactate from methylglyoxal: step 2/2. Functionally, thiolesterase that catalyzes the hydrolysis of S-D-lactoyl-glutathione to form glutathione and D-lactic acid. In Vibrio vulnificus (strain YJ016), this protein is Hydroxyacylglutathione hydrolase 1.